The primary structure comprises 205 residues: Probable thymidylate kinase (205 aa).

10 to 17 (GIDGSGKT) is a binding site for ATP.

The protein belongs to the thymidylate kinase family.

The catalysed reaction is dTMP + ATP = dTDP + ADP. This Pyrococcus abyssi (strain GE5 / Orsay) protein is Probable thymidylate kinase (tmk).